The following is a 348-amino-acid chain: Ion-translocating oxidoreductase complex subunit D (348 aa).

Helical transmembrane passes span 19–39, 41–61, 66–86, 87–107, and 122–142; these read FMLW…AFFG, GVVI…IVVA, KSTT…ILAM, AIPP…ALLL, and PAMV…TSWL. Threonine 186 carries the FMN phosphoryl threonine modification. Helical transmembrane passes span 212 to 232, 236 to 256, 265 to 285, 291 to 311, and 315 to 335; these read IFAR…LFLL, IIHW…SALT, LNVL…FIAT, SITP…AYLI, and GSYP…VPLI.

Belongs to the NqrB/RnfD family. In terms of assembly, the complex is composed of six subunits: RnfA, RnfB, RnfC, RnfD, RnfE and RnfG. The cofactor is FMN.

The protein localises to the cell inner membrane. Functionally, part of a membrane-bound complex that couples electron transfer with translocation of ions across the membrane. This is Ion-translocating oxidoreductase complex subunit D from Haemophilus ducreyi (strain 35000HP / ATCC 700724).